A 79-amino-acid polypeptide reads, in one-letter code: Neurotoxin BmK-M9 (79 aa).

Positions 1–14 (MISFALLLMTGVES) are cleaved as a signal peptide. In terms of domain architecture, LCN-type CS-alpha/beta spans 16–78 (RDAYIAKPEN…VPIRVPGKCH (63 aa)). 4 disulfide bridges follow: Cys26–Cys77, Cys30–Cys50, Cys36–Cys60, and Cys40–Cys62. Residue Arg79 is a propeptide, removed by a carboxypeptidase.

It belongs to the long (4 C-C) scorpion toxin superfamily. Sodium channel inhibitor family. Alpha subfamily. Expressed by the venom gland.

It is found in the secreted. Functionally, binds to sodium channels (Nav) and inhibits the inactivation of the activated channels, thereby blocking neuronal transmission. This toxin is active against mammals. In Olivierus martensii (Manchurian scorpion), this protein is Neurotoxin BmK-M9.